Here is a 317-residue protein sequence, read N- to C-terminus: Olfactory receptor 1082 (317 aa).

The Extracellular segment spans residues 1-26 (MESGNSTRRFSSFFLLGFTENPQLHF). An N-linked (GlcNAc...) asparagine glycan is attached at Asn5. Residues 27–51 (LIFALFLSMYLVTVLGNLLIIMAII) traverse the membrane as a helical segment. The Cytoplasmic segment spans residues 52 to 58 (TQSHLHT). Residues 59–80 (PMYFFLANLSFVDICFTSTTIP) traverse the membrane as a helical segment. The Extracellular portion of the chain corresponds to 81–101 (KMLVNIYTQSKSITYEDCISQ). Cys98 and Cys190 are joined by a disulfide. The helical transmembrane segment at 102 to 121 (MCVFLVFAELGNFLLAVMAY) threads the bilayer. The Cytoplasmic portion of the chain corresponds to 122-140 (DRYVAXCHPLCYTVIVNHR). The chain crosses the membrane as a helical span at residues 141–159 (LCILLLLLSWVISIFHAFI). The Extracellular segment spans residues 160–197 (QSLIVLQLTFCGDVKIPHFFCELNQLSQLTCSDNFPSH). Residues 198–220 (LIMNLVPVMLAAISFSGILYSYF) form a helical membrane-spanning segment. The Cytoplasmic segment spans residues 221–237 (KIVSSIHSISTVQGKYK). Residues 238–261 (AFSTCASHLSIVSLFYSTGLGVYV) form a helical membrane-spanning segment. Residues 262 to 273 (SSAVVQSSHSAA) are Extracellular-facing. The helical transmembrane segment at 274–293 (SASVMYTVVTPMLNPFIYSL) threads the bilayer. Residues 294 to 317 (RNKDVKRALERLLEGNCKVHHWTG) lie on the Cytoplasmic side of the membrane.

The protein belongs to the G-protein coupled receptor 1 family. In terms of tissue distribution, olfactory epithelium.

The protein resides in the cell membrane. In terms of biological role, odorant receptor. The sequence is that of Olfactory receptor 1082 (Olr1082) from Rattus norvegicus (Rat).